A 70-amino-acid chain; its full sequence is Small ribosomal subunit protein bS21A (70 aa).

Belongs to the bacterial ribosomal protein bS21 family.

The polypeptide is Small ribosomal subunit protein bS21A (Burkholderia orbicola (strain AU 1054)).